The primary structure comprises 713 residues: Calpastatin (713 aa).

Positions 1 to 21 (MSRPGPKPAASSRPRRGAAAS) are enriched in low complexity. The tract at residues 1 to 152 (MSRPGPKPAA…SADGESVAGG (152 aa)) is disordered. Polar residues predominate over residues 47 to 64 (VTASSAATGTSPRMSTTG). Ser57 carries the post-translational modification Phosphoserine. Lys69 participates in a covalent cross-link: Glycyl lysine isopeptide (Lys-Gly) (interchain with G-Cter in SUMO2). Lys86 bears the N6-acetyllysine mark. The span at 120–129 (SRSNEQIVSE) shows a compositional bias: polar residues. Phosphoserine occurs at positions 122 and 171. Thr173 is subject to Phosphothreonine. Residues 208–260 (TNKDDPPYTGPVVLDPMDSTYLEALGIKEGTIPPEYRKLLEKNEAITGPLPDS) form an Inhibitory domain 1 repeat. Residues 253-402 (ITGPLPDSPK…PEETSKCLSE (150 aa)) form a disordered region. Phosphoserine occurs at positions 260 and 281. 3 stretches are compositionally biased toward polar residues: residues 275 to 285 (SDFTCSSPTGK), 294 to 304 (GESSKAQSAGV), and 326 to 346 (QALQALSDSLGTRQPDPQSHL). Residues 341–393 (DPQSHLRQAKQVKEAKAKEERQEKCGEDEDTVPAEYRLKPAKDKDGKPLLPEP) form an Inhibitory domain 2 repeat. 2 stretches are compositionally biased toward basic and acidic residues: residues 351 to 365 (QVKEAKAKEERQEKC) and 376 to 387 (YRLKPAKDKDGK). Ser401, Ser403, Ser410, and Ser445 each carry phosphoserine. Residues 442 to 507 (LARSLGTRKE…PLLPKEAEEQ (66 aa)) are disordered. A compositionally biased stretch (basic and acidic residues) spans 448–505 (TRKEDPEDEKSLVDKVKEKAKEEDHEKLGEKEETIPPDYRLEIVKDKDGKPLLPKEAE). Residues 451 to 504 (EDPEDEKSLVDKVKEKAKEEDHEKLGEKEETIPPDYRLEIVKDKDGKPLLPKEA) form an Inhibitory domain 3 repeat. 2 positions are modified to phosphoserine: Ser521 and Ser532. The span at 544–558 (VSETVSQVPAPSNHT) shows a compositional bias: polar residues. The segment at 544-713 (VSETVSQVPA…PKPKVDEDAT (170 aa)) is disordered. 2 positions are modified to phosphoserine: Ser580 and Ser582. An Inhibitory domain 4 repeat occupies 588-641 (PDPDENKPLDDKVKEKIKAEHSEKLGERDDTIPPEYRHLLDNDGKDKPEKPLTK). Basic and acidic residues-rich tracts occupy residues 588-648 (PDPD…KLGQ) and 687-713 (SKNEEKTKDSSKKTEEVPKPKVDEDAT).

It belongs to the protease inhibitor I27 (calpastatin) family.

Specific inhibition of calpain (calcium-dependent cysteine protease). Plays a key role in postmortem tenderization of meat and have been proposed to be involved in muscle protein degradation in living tissue. This Rattus norvegicus (Rat) protein is Calpastatin (Cast).